A 202-amino-acid polypeptide reads, in one-letter code: Potassium-transporting ATPase KdpC subunit 1 (202 aa).

The chain crosses the membrane as a helical span at residues 17–37; sequence LWVIAAVIYPFFMIAVGQIVF.

Belongs to the KdpC family. As to quaternary structure, the system is composed of three essential subunits: KdpA, KdpB and KdpC.

The protein resides in the cell inner membrane. Part of the high-affinity ATP-driven potassium transport (or Kdp) system, which catalyzes the hydrolysis of ATP coupled with the electrogenic transport of potassium into the cytoplasm. This subunit acts as a catalytic chaperone that increases the ATP-binding affinity of the ATP-hydrolyzing subunit KdpB by the formation of a transient KdpB/KdpC/ATP ternary complex. This chain is Potassium-transporting ATPase KdpC subunit 1, found in Nostoc sp. (strain PCC 7120 / SAG 25.82 / UTEX 2576).